A 187-amino-acid polypeptide reads, in one-letter code: Oligoribonuclease (187 aa).

One can recognise an Exonuclease domain in the interval Leu-7–Met-170. Tyr-128 is a catalytic residue.

This sequence belongs to the oligoribonuclease family.

It localises to the cytoplasm. Its function is as follows. 3'-to-5' exoribonuclease specific for small oligoribonucleotides. This is Oligoribonuclease from Neisseria meningitidis serogroup C / serotype 2a (strain ATCC 700532 / DSM 15464 / FAM18).